We begin with the raw amino-acid sequence, 357 residues long: tRNA N6-adenosine threonylcarbamoyltransferase (357 aa).

Histidine 116 and histidine 120 together coordinate Fe cation. Residues 139 to 143 (LVSGG), aspartate 172, glycine 185, and asparagine 284 contribute to the substrate site. Aspartate 312 lines the Fe cation pocket.

It belongs to the KAE1 / TsaD family. It depends on Fe(2+) as a cofactor.

The protein resides in the cytoplasm. It carries out the reaction L-threonylcarbamoyladenylate + adenosine(37) in tRNA = N(6)-L-threonylcarbamoyladenosine(37) in tRNA + AMP + H(+). In terms of biological role, required for the formation of a threonylcarbamoyl group on adenosine at position 37 (t(6)A37) in tRNAs that read codons beginning with adenine. Is involved in the transfer of the threonylcarbamoyl moiety of threonylcarbamoyl-AMP (TC-AMP) to the N6 group of A37, together with TsaE and TsaB. TsaD likely plays a direct catalytic role in this reaction. The polypeptide is tRNA N6-adenosine threonylcarbamoyltransferase (Synechococcus sp. (strain CC9902)).